A 372-amino-acid chain; its full sequence is Putative glutamate--cysteine ligase 2 (372 aa).

The protein belongs to the glutamate--cysteine ligase type 2 family. YbdK subfamily. As to quaternary structure, homodimer.

The enzyme catalyses L-cysteine + L-glutamate + ATP = gamma-L-glutamyl-L-cysteine + ADP + phosphate + H(+). Functionally, ATP-dependent carboxylate-amine ligase which exhibits weak glutamate--cysteine ligase activity. In Citrobacter koseri (strain ATCC BAA-895 / CDC 4225-83 / SGSC4696), this protein is Putative glutamate--cysteine ligase 2.